A 400-amino-acid chain; its full sequence is Lysophospholipid transporter LplT (400 aa).

12 consecutive transmembrane segments (helical) span residues 19 to 39, 53 to 73, 91 to 111, 139 to 159, 164 to 184, 195 to 213, 227 to 247, 257 to 277, 281 to 301, 304 to 324, 352 to 372, and 373 to 393; these read VIVA…ATLA, VLQM…GQIA, AGAA…LVGI, LMEA…GVLA, IAAL…NLFI, SWRL…VVLW, LFWG…PVAL, YLNA…AKLV, TVSR…IFSL, ALLP…FFVV, NSAM…GVPA, and VAIG…LWIW.

This sequence belongs to the major facilitator superfamily. LplT (TC 2.A.1.42) family.

The protein resides in the cell inner membrane. Catalyzes the facilitated diffusion of 2-acyl-glycero-3-phosphoethanolamine (2-acyl-GPE) into the cell. The chain is Lysophospholipid transporter LplT from Salmonella schwarzengrund (strain CVM19633).